The following is a 108-amino-acid chain: uncharacterized protein (108 aa).

This is an uncharacterized protein from Bacillus subtilis (strain 168).